Reading from the N-terminus, the 319-residue chain is Cytochrome c biogenesis protein CcsA (319 aa).

The next 7 membrane-spanning stretches (helical) occupy residues 9–29 (ILTHISFSTISIVITIHLITL), 44–64 (GMIVTFFSITGFLVSRWASSG), 68–88 (LSNLYESLIFLSWALYILHTI), 143–163 (MLLSYATLLCGSLLSAAILII), 223–243 (VISLGFTLLTIGILCGAVWAN), 257–271 (TWAFITWTIFAIYLH), and 286–306 (VASIGFLIIWICYFGINLLGI).

The protein belongs to the CcmF/CycK/Ccl1/NrfE/CcsA family. As to quaternary structure, may interact with Ccs1.

The protein localises to the plastid. It localises to the chloroplast thylakoid membrane. In terms of biological role, required during biogenesis of c-type cytochromes (cytochrome c6 and cytochrome f) at the step of heme attachment. This chain is Cytochrome c biogenesis protein CcsA, found in Agrostis stolonifera (Creeping bentgrass).